The following is a 330-amino-acid chain: Ketol-acid reductoisomerase (NADP(+)) (330 aa).

One can recognise a KARI N-terminal Rossmann domain in the interval 1–181 (MNIYYEQDAD…GGTKAGVIET (181 aa)). Residues 24-27 (YGSQ), Lys47, Ser50, Ser52, and 82-85 (DQTQ) each bind NADP(+). His107 is an active-site residue. Gly133 lines the NADP(+) pocket. Residues 182–327 (SFKDETETDL…AKLRGMMSWL (146 aa)) form the KARI C-terminal knotted domain. The Mg(2+) site is built by Asp190, Glu194, Glu226, and Glu230. Ser251 is a substrate binding site.

It belongs to the ketol-acid reductoisomerase family. Mg(2+) serves as cofactor.

The enzyme catalyses (2R)-2,3-dihydroxy-3-methylbutanoate + NADP(+) = (2S)-2-acetolactate + NADPH + H(+). It carries out the reaction (2R,3R)-2,3-dihydroxy-3-methylpentanoate + NADP(+) = (S)-2-ethyl-2-hydroxy-3-oxobutanoate + NADPH + H(+). Its pathway is amino-acid biosynthesis; L-isoleucine biosynthesis; L-isoleucine from 2-oxobutanoate: step 2/4. The protein operates within amino-acid biosynthesis; L-valine biosynthesis; L-valine from pyruvate: step 2/4. In terms of biological role, involved in the biosynthesis of branched-chain amino acids (BCAA). Catalyzes an alkyl-migration followed by a ketol-acid reduction of (S)-2-acetolactate (S2AL) to yield (R)-2,3-dihydroxy-isovalerate. In the isomerase reaction, S2AL is rearranged via a Mg-dependent methyl migration to produce 3-hydroxy-3-methyl-2-ketobutyrate (HMKB). In the reductase reaction, this 2-ketoacid undergoes a metal-dependent reduction by NADPH to yield (R)-2,3-dihydroxy-isovalerate. In Chlorobaculum tepidum (strain ATCC 49652 / DSM 12025 / NBRC 103806 / TLS) (Chlorobium tepidum), this protein is Ketol-acid reductoisomerase (NADP(+)).